The primary structure comprises 122 residues: Large ribosomal subunit protein uL14c (122 aa).

The protein belongs to the universal ribosomal protein uL14 family. As to quaternary structure, part of the 50S ribosomal subunit.

The protein localises to the plastid. It is found in the cyanelle. Its function is as follows. Binds to 23S rRNA. This chain is Large ribosomal subunit protein uL14c, found in Cyanophora paradoxa.